The sequence spans 161 residues: 6,7-dimethyl-8-ribityllumazine synthase (161 aa).

5-amino-6-(D-ribitylamino)uracil contacts are provided by residues Trp-26, 58–60 (SFE), and 81–83 (VVI). Residue 86–87 (GT) coordinates (2S)-2-hydroxy-3-oxobutyl phosphate. His-89 (proton donor) is an active-site residue. Phe-114 provides a ligand contact to 5-amino-6-(D-ribitylamino)uracil. A (2S)-2-hydroxy-3-oxobutyl phosphate-binding site is contributed by Arg-128.

It belongs to the DMRL synthase family.

It carries out the reaction (2S)-2-hydroxy-3-oxobutyl phosphate + 5-amino-6-(D-ribitylamino)uracil = 6,7-dimethyl-8-(1-D-ribityl)lumazine + phosphate + 2 H2O + H(+). The protein operates within cofactor biosynthesis; riboflavin biosynthesis; riboflavin from 2-hydroxy-3-oxobutyl phosphate and 5-amino-6-(D-ribitylamino)uracil: step 1/2. Catalyzes the formation of 6,7-dimethyl-8-ribityllumazine by condensation of 5-amino-6-(D-ribitylamino)uracil with 3,4-dihydroxy-2-butanone 4-phosphate. This is the penultimate step in the biosynthesis of riboflavin. This Streptomyces coelicolor (strain ATCC BAA-471 / A3(2) / M145) protein is 6,7-dimethyl-8-ribityllumazine synthase.